The chain runs to 237 residues: MQQSKEERVHDVFEKISDKYDVMNSVISFQRHKAWRKETMRIMDVQPGSQALDVCCGTADWTIALAGAVGEQGKVVGLDFSENMLSVGKQKVEALQLKQVELLHGNAMELPFEDNTFDYVTIGFGLRNVPDYMHVLKEMTRVVKPGGKVICLETSQPTMIGFRQGYILYFKYIMPLFGKMFAKSYKEYSWLQESASTFPGMKELAQMFEQAGLERVQVKPFTFGVAAMHLGIKPESK.

S-adenosyl-L-methionine is bound by residues Thr58, Asp79, and 106–107 (NA).

It belongs to the class I-like SAM-binding methyltransferase superfamily. MenG/UbiE family.

It catalyses the reaction a 2-demethylmenaquinol + S-adenosyl-L-methionine = a menaquinol + S-adenosyl-L-homocysteine + H(+). It participates in quinol/quinone metabolism; menaquinone biosynthesis; menaquinol from 1,4-dihydroxy-2-naphthoate: step 2/2. Its function is as follows. Methyltransferase required for the conversion of demethylmenaquinol (DMKH2) to menaquinol (MKH2). The protein is Demethylmenaquinone methyltransferase of Bacillus cereus (strain B4264).